Consider the following 591-residue polypeptide: Chaperone protein DnaK (591 aa).

Position 175 is a phosphothreonine; by autocatalysis (T175). A compositionally biased stretch (low complexity) spans 568 to 577 (AQAAEFANKQ). The tract at residues 568–591 (AQAAEFANKQNESDPNNNSSEQNN) is disordered. The span at 580 to 591 (SDPNNNSSEQNN) shows a compositional bias: polar residues.

This sequence belongs to the heat shock protein 70 family.

Acts as a chaperone. This Mycoplasma mycoides subsp. mycoides SC (strain CCUG 32753 / NCTC 10114 / PG1) protein is Chaperone protein DnaK.